The primary structure comprises 433 residues: Serine--tRNA ligase (433 aa).

Thr-235 to Glu-237 is an L-serine binding site. Arg-266–Glu-268 lines the ATP pocket. Glu-289 contributes to the L-serine binding site. Glu-353–Ser-356 is an ATP binding site. Residue Ser-388 participates in L-serine binding.

This sequence belongs to the class-II aminoacyl-tRNA synthetase family. Type-1 seryl-tRNA synthetase subfamily. As to quaternary structure, homodimer. The tRNA molecule binds across the dimer.

The protein localises to the cytoplasm. The enzyme catalyses tRNA(Ser) + L-serine + ATP = L-seryl-tRNA(Ser) + AMP + diphosphate + H(+). It carries out the reaction tRNA(Sec) + L-serine + ATP = L-seryl-tRNA(Sec) + AMP + diphosphate + H(+). Its pathway is aminoacyl-tRNA biosynthesis; selenocysteinyl-tRNA(Sec) biosynthesis; L-seryl-tRNA(Sec) from L-serine and tRNA(Sec): step 1/1. In terms of biological role, catalyzes the attachment of serine to tRNA(Ser). Is also able to aminoacylate tRNA(Sec) with serine, to form the misacylated tRNA L-seryl-tRNA(Sec), which will be further converted into selenocysteinyl-tRNA(Sec). The protein is Serine--tRNA ligase of Burkholderia cepacia (Pseudomonas cepacia).